Reading from the N-terminus, the 419-residue chain is Glutamyl-tRNA reductase (419 aa).

Residues 49–52 (TCNR), serine 107, 112–114 (EPQ), and glutamine 118 contribute to the substrate site. Cysteine 50 acts as the Nucleophile in catalysis. NADP(+) is bound at residue 187-192 (GAGETI).

It belongs to the glutamyl-tRNA reductase family. In terms of assembly, homodimer.

It catalyses the reaction (S)-4-amino-5-oxopentanoate + tRNA(Glu) + NADP(+) = L-glutamyl-tRNA(Glu) + NADPH + H(+). It participates in porphyrin-containing compound metabolism; protoporphyrin-IX biosynthesis; 5-aminolevulinate from L-glutamyl-tRNA(Glu): step 1/2. Functionally, catalyzes the NADPH-dependent reduction of glutamyl-tRNA(Glu) to glutamate 1-semialdehyde (GSA). The polypeptide is Glutamyl-tRNA reductase (Psychromonas ingrahamii (strain DSM 17664 / CCUG 51855 / 37)).